A 164-amino-acid chain; its full sequence is uncharacterized protein (164 aa).

This is an uncharacterized protein from Acanthamoeba polyphaga (Amoeba).